Here is an 886-residue protein sequence, read N- to C-terminus: Putative respiratory burst oxidase homolog protein H (886 aa).

Disordered stretches follow at residues 1-46 (MKSN…KKNA) and 64-103 (WRKS…TTSS). Over 1-316 (MKSNTPTEDS…AELMHENWKK (316 aa)) the chain is Cytoplasmic. Polar residues predominate over residues 64 to 78 (WRKSGNLGSPSTRKS). EF-hand-like regions lie at residues 137 to 145 (SVDGKLPKE) and 171 to 183 (RQIE…DKEQ). EF-hand domains follow at residues 195–230 (DLDC…SASA) and 239–274 (NAAA…MVTN). D208, N210, D212, K214, and E219 together coordinate Ca(2+). S283 carries the phosphoserine modification. A helical transmembrane segment spans residues 317-337 (LWVLALWAIINVYLFMWKYEE). Residues 338–404 (FMRNPLYNIT…INFHKVIAYM (67 aa)) lie on the Extracellular side of the membrane. Positions 355–512 (KGAAETLKLN…LLVLAYILLI (158 aa)) constitute a Ferric oxidoreductase domain. A helical membrane pass occupies residues 405–421 (IAFQALLHTALHIFCNY). Topologically, residues 422–456 (PRLSSCSYDVFLTYAGAALGNTQPSYLGLMLTSVS) are cytoplasmic. A helical membrane pass occupies residues 457 to 477 (ITGVLMIFFMGFSFTLAMHYF). Topologically, residues 478–499 (RRNIVKLPKPFNVLAGFNAFWY) are extracellular. The chain crosses the membrane as a helical span at residues 500–520 (AHHLLVLAYILLIIHGYYLII). Residues 521-528 (EKPWYQKT) lie on the Cytoplasmic side of the membrane. The helical transmembrane segment at 529-546 (TWMYLAVPMLFYASERLF) threads the bilayer. Residues 547-688 (SRLLQEHSHR…PYGAPAQNYQ (142 aa)) lie on the Extracellular side of the membrane. An FAD-binding FR-type domain is found at 552 to 686 (EHSHRVNVIK…KGPYGAPAQN (135 aa)). A helical transmembrane segment spans residues 689–709 (KFDILLLVGLGIGATPFISIL). The Cytoplasmic portion of the chain corresponds to 710 to 886 (KDMLNHLKPG…TRFTFHKENF (177 aa)).

The protein belongs to the RBOH (TC 5.B.1.3) family. In terms of assembly, monomer and homodimer.

The protein resides in the membrane. Calcium-dependent NADPH oxidase that generates superoxide. This chain is Putative respiratory burst oxidase homolog protein H (RBOHH), found in Arabidopsis thaliana (Mouse-ear cress).